The chain runs to 473 residues: tRNA-2-methylthio-N(6)-dimethylallyladenosine synthase (473 aa).

Residues 5-125 (RKLHIKSYGC…LPQLLARADQ (121 aa)) enclose the MTTase N-terminal domain. Residues Cys14, Cys50, Cys88, Cys166, Cys170, and Cys173 each coordinate [4Fe-4S] cluster. The region spanning 152-384 (RARGISAFVT…QQLIDSQQSA (233 aa)) is the Radical SAM core domain. The TRAM domain maps to 387–459 (KAAIGQTVDV…RYSLLGELAA (73 aa)).

Belongs to the methylthiotransferase family. MiaB subfamily. Monomer. It depends on [4Fe-4S] cluster as a cofactor.

The protein localises to the cytoplasm. It catalyses the reaction N(6)-dimethylallyladenosine(37) in tRNA + (sulfur carrier)-SH + AH2 + 2 S-adenosyl-L-methionine = 2-methylsulfanyl-N(6)-dimethylallyladenosine(37) in tRNA + (sulfur carrier)-H + 5'-deoxyadenosine + L-methionine + A + S-adenosyl-L-homocysteine + 2 H(+). Functionally, catalyzes the methylthiolation of N6-(dimethylallyl)adenosine (i(6)A), leading to the formation of 2-methylthio-N6-(dimethylallyl)adenosine (ms(2)i(6)A) at position 37 in tRNAs that read codons beginning with uridine. In Rhodopseudomonas palustris (strain BisB5), this protein is tRNA-2-methylthio-N(6)-dimethylallyladenosine synthase.